Here is a 173-residue protein sequence, read N- to C-terminus: Protein tyrosine phosphatase type IVA 3 (173 aa).

One can recognise a Tyrosine-protein phosphatase domain in the interval 8–161 (APVEVSYRHM…YRPKQRLRFK (154 aa)). A disulfide bridge links Cys49 with Cys104. Asp72 functions as the Proton donor in the catalytic mechanism. Catalysis depends on Cys104, which acts as the Phosphocysteine intermediate. Arg110 contributes to the substrate binding site. Cys170 is modified (cysteine methyl ester). Cys170 is lipidated: S-farnesyl cysteine. A propeptide spans 171–173 (CVM) (removed in mature form).

It belongs to the protein-tyrosine phosphatase family. In terms of assembly, interacts with tubulin. Post-translationally, farnesylated. Farnesylation is required for membrane targeting. Unfarnesylated forms are shifted into the nucleus. Present in the small intestine, where it is located in the differentiated epithelial cells of the villus but not in the proliferating crypt cells (at protein level). Expressed in heart and skeletal muscle, and at lower levels in lung, spleen and testis.

The protein resides in the cell membrane. Its subcellular location is the early endosome. The enzyme catalyses O-phospho-L-tyrosyl-[protein] + H2O = L-tyrosyl-[protein] + phosphate. Its activity is regulated as follows. Inhibited by sodium orthovanadate and peroxovanadium compounds, and by pentamidine. Its function is as follows. Protein tyrosine phosphatase which stimulates progression from G1 into S phase during mitosis. Enhances cell proliferation, cell motility and invasive activity, and promotes cancer metastasis. May be involved in the progression of cardiac hypertrophy by inhibiting intracellular calcium mobilization in response to angiotensin II. This is Protein tyrosine phosphatase type IVA 3 (Ptp4a3) from Mus musculus (Mouse).